The chain runs to 1104 residues: Valine--tRNA ligase, mitochondrial (1104 aa).

A mitochondrion-targeting transit peptide spans 1–47 (MNKWLNTLSKTFTFRLLNCHYRRSLPLCQNFSLKKSLTHNQVRFFKM). Ser-73 carries the post-translational modification Phosphoserine. The interval 99–119 (KKNAAATTGASQKKPKKKKEV) is disordered. The 'HIGH' region motif lies at 190 to 200 (PNVTGALHIGH). Ser-294 and Ser-332 each carry phosphoserine. Positions 703–707 (KMSKS) match the 'KMSKS' region motif. Position 706 (Lys-706) interacts with ATP. Ser-707 bears the Phosphoserine mark. Phosphothreonine is present on Thr-1003.

The protein belongs to the class-I aminoacyl-tRNA synthetase family.

The protein localises to the cytoplasm. It is found in the mitochondrion. The catalysed reaction is tRNA(Val) + L-valine + ATP = L-valyl-tRNA(Val) + AMP + diphosphate. The protein is Valine--tRNA ligase, mitochondrial (VAS1) of Saccharomyces cerevisiae (strain ATCC 204508 / S288c) (Baker's yeast).